The primary structure comprises 371 residues: Signal peptide peptidase-like 1 (371 aa).

Residues Met-1–Lys-6 lie on the Lumenal side of the membrane. The helical transmembrane segment at Leu-7–Tyr-27 threads the bilayer. The Cytoplasmic segment spans residues Ala-28–Gln-57. The helical transmembrane segment at Ala-58–Leu-75 threads the bilayer. Residues Phe-76–Ser-80 lie on the Lumenal side of the membrane. A helical transmembrane segment spans residues His-81 to Val-103. The Cytoplasmic portion of the chain corresponds to Asn-104–Lys-123. A helical membrane pass occupies residues Pro-124–Ser-146. Topologically, residues Gly-147–Trp-149 are lumenal. Residues Leu-150–Val-167 traverse the membrane as a helical segment. Residues Arg-168–Asn-171 are Cytoplasmic-facing. The chain crosses the membrane as a helical span at residues Ile-172 to Phe-192. Asp-186 is an active-site residue. Topologically, residues Ser-193–Tyr-258 are lumenal. The helical transmembrane segment at Met-259–Phe-279 threads the bilayer. Asp-265 is a catalytic residue. Over Asp-280 to Tyr-301 the chain is Cytoplasmic. A helical membrane pass occupies residues Val-302 to Leu-322. The Lumenal portion of the chain corresponds to Ser-323–Pro-326. Residues Gln-327 to Leu-347 traverse the membrane as a helical segment. The PAL signature appears at Pro-328–Leu-330. The Cytoplasmic segment spans residues Arg-348 to Val-371.

It belongs to the peptidase A22B family.

It is found in the endosome membrane. Its function is as follows. Intramembrane-cleaving aspartic protease (I-CLiP) that cleaves type II membrane signal peptides in the hydrophobic plane of the membrane. This Oryza sativa subsp. japonica (Rice) protein is Signal peptide peptidase-like 1 (SPPL1).